The chain runs to 50 residues: Photosystem II reaction center protein M (50 aa).

A helical membrane pass occupies residues 7 to 27 (GFVASLLFVGVPTIFLIGLFI).

The protein belongs to the PsbM family. PSII is composed of 1 copy each of membrane proteins PsbA, PsbB, PsbC, PsbD, PsbE, PsbF, PsbH, PsbI, PsbJ, PsbK, PsbL, PsbM, PsbT, PsbX, PsbY, Psb30/Ycf12, peripheral proteins PsbO, CyanoQ (PsbQ), PsbU, PsbV and a large number of cofactors. It forms dimeric complexes.

Its subcellular location is the cellular thylakoid membrane. Its function is as follows. One of the components of the core complex of photosystem II (PSII). PSII is a light-driven water:plastoquinone oxidoreductase that uses light energy to abstract electrons from H(2)O, generating O(2) and a proton gradient subsequently used for ATP formation. It consists of a core antenna complex that captures photons, and an electron transfer chain that converts photonic excitation into a charge separation. This subunit is found at the monomer-monomer interface. This is Photosystem II reaction center protein M from Prochlorococcus marinus (strain MIT 9515).